Here is a 599-residue protein sequence, read N- to C-terminus: Elongation factor 4 (599 aa).

A tr-type G domain is found at 4-186 (KFIRNFSIIA…AIIKHVPPPL (183 aa)). GTP contacts are provided by residues 16–21 (DHGKST) and 133–136 (NKID).

It belongs to the TRAFAC class translation factor GTPase superfamily. Classic translation factor GTPase family. LepA subfamily.

Its subcellular location is the cell membrane. It catalyses the reaction GTP + H2O = GDP + phosphate + H(+). Its function is as follows. Required for accurate and efficient protein synthesis under certain stress conditions. May act as a fidelity factor of the translation reaction, by catalyzing a one-codon backward translocation of tRNAs on improperly translocated ribosomes. Back-translocation proceeds from a post-translocation (POST) complex to a pre-translocation (PRE) complex, thus giving elongation factor G a second chance to translocate the tRNAs correctly. Binds to ribosomes in a GTP-dependent manner. This chain is Elongation factor 4, found in Ureaplasma urealyticum serovar 10 (strain ATCC 33699 / Western).